We begin with the raw amino-acid sequence, 240 residues long: Transcription factor bHLH47 (240 aa).

The segment covering 1–13 has biased composition (polar residues); the sequence is MVSKTPSTSSDEA. The disordered stretch occupies residues 1–26; sequence MVSKTPSTSSDEANATADERCRKGKV. One can recognise a bHLH domain in the interval 27–77; sequence PKRINKAVRERLKREHLNELFIELADTLELNQQNSGKASILCEATRFLKDV. The stretch at 98-131 forms a coiled coil; the sequence is VTTEKNELKEETSVLETEISKLQNEIEARANQSK. Residues 128-138 are compositionally biased toward polar residues; sequence NQSKPDLNTSP. Positions 128 to 153 are disordered; it reads NQSKPDLNTSPAPEYHHHHYQQQHPE.

In terms of assembly, homodimer. Forms heterodimer with PYEL proteins bHLH115, bHLH104 and ILR3. As to expression, expressed constitutively in roots, leaves, stems, and flowers.

It is found in the nucleus. This Arabidopsis thaliana (Mouse-ear cress) protein is Transcription factor bHLH47 (BHLH47).